We begin with the raw amino-acid sequence, 1213 residues long: DNA-directed RNA polymerase subunit beta' (1213 aa).

The Zn(2+) site is built by Cys-60, Cys-62, Cys-75, and Cys-78. Positions 450, 452, and 454 each coordinate Mg(2+). Residues Cys-819, Cys-893, Cys-900, and Cys-903 each coordinate Zn(2+).

It belongs to the RNA polymerase beta' chain family. The RNAP catalytic core consists of 2 alpha, 1 beta, 1 beta' and 1 omega subunit. When a sigma factor is associated with the core the holoenzyme is formed, which can initiate transcription. It depends on Mg(2+) as a cofactor. The cofactor is Zn(2+).

The enzyme catalyses RNA(n) + a ribonucleoside 5'-triphosphate = RNA(n+1) + diphosphate. Functionally, DNA-dependent RNA polymerase catalyzes the transcription of DNA into RNA using the four ribonucleoside triphosphates as substrates. This chain is DNA-directed RNA polymerase subunit beta', found in Streptococcus pyogenes serotype M18 (strain MGAS8232).